The sequence spans 48 residues: Large ribosomal subunit protein eL40 (48 aa).

This sequence belongs to the eukaryotic ribosomal protein eL40 family.

This chain is Large ribosomal subunit protein eL40, found in Methanocella arvoryzae (strain DSM 22066 / NBRC 105507 / MRE50).